A 202-amino-acid chain; its full sequence is Large ribosomal subunit protein uL4 (202 aa).

The tract at residues 47–67 (KTKAEVSGGGVKPWKQKGTGR) is disordered.

It belongs to the universal ribosomal protein uL4 family. As to quaternary structure, part of the 50S ribosomal subunit.

Its function is as follows. One of the primary rRNA binding proteins, this protein initially binds near the 5'-end of the 23S rRNA. It is important during the early stages of 50S assembly. It makes multiple contacts with different domains of the 23S rRNA in the assembled 50S subunit and ribosome. Functionally, forms part of the polypeptide exit tunnel. The chain is Large ribosomal subunit protein uL4 from Dichelobacter nodosus (strain VCS1703A).